Here is a 250-residue protein sequence, read N- to C-terminus: ATP synthase subunit a (250 aa).

6 consecutive transmembrane segments (helical) span residues 29–49 (ASLFMAASAAVAVGFLYFATS), 84–104 (FFPLVFSLFMFVLTANLLGMF), 114–134 (IIVTFALAILVIGTVLVYGFY), 143–163 (VFVPSGVPGILLPLVVAIEII), 193–213 (FVASLGALGAVGVGGAVLPLI), and 216–236 (VALTGLEFLVAFLQAYVFAVL).

This sequence belongs to the ATPase A chain family. As to quaternary structure, F-type ATPases have 2 components, CF(1) - the catalytic core - and CF(0) - the membrane proton channel. CF(1) has five subunits: alpha(3), beta(3), gamma(1), delta(1), epsilon(1). CF(0) has three main subunits: a(1), b(2) and c(9-12). The alpha and beta chains form an alternating ring which encloses part of the gamma chain. CF(1) is attached to CF(0) by a central stalk formed by the gamma and epsilon chains, while a peripheral stalk is formed by the delta and b chains.

The protein localises to the cell inner membrane. In terms of biological role, key component of the proton channel; it plays a direct role in the translocation of protons across the membrane. The sequence is that of ATP synthase subunit a from Rhizobium etli (strain CIAT 652).